Here is a 544-residue protein sequence, read N- to C-terminus: Dynein intermediate chain 1 (544 aa).

6 WD repeats span residues 241–281, 289–330, 342–387, 402–441, 461–501, and 506–544; these read KARS…YPVS, GHLE…RPSE, SQCI…QPSN, VMTS…NQHE, THKA…EAPV, and PDGK…NLAN.

It belongs to the dynein intermediate chain family.

It localises to the cytoplasm. Functionally, has a role in meiotic nuclear divsion where it promotes the movement of 'horsetails'. This Schizosaccharomyces pombe (strain 972 / ATCC 24843) (Fission yeast) protein is Dynein intermediate chain 1 (dic1).